A 102-amino-acid polypeptide reads, in one-letter code: Complement inhibitor RaCI3 (102 aa).

The N-terminal stretch at 1-24 is a signal peptide; it reads MAALNGLVLLLLTISAMFISECYS. 3 disulfides stabilise this stretch: C37/C61, C42/C63, and C57/C78.

It belongs to the RaCI family. Expressed in salivary glands.

The protein localises to the secreted. Its function is as follows. Complement inhibitor. Prevents complement-mediated C5 activation by binding to C5. Binds C5 at a different binding site than the other tick complement inhibitors OmCI and CirpT1, and the drug eculizumab. Inhibits complement in human and guinea pig but not in other species tested (rabbit, rat, mouse, and pig). This Dermacentor andersoni (Rocky mountain wood tick) protein is Complement inhibitor RaCI3.